Consider the following 278-residue polypeptide: MMLAQVNSIAFRLFGIPVYWYAIIIVSGIALAVWLSSREAVRVGLKEDDVFDFMLWGLPAAIVGARLYYVAFQWQDYVDNPIEIFFTRNGGLAIYGGLIGGGLALFFFTRHRFISTWTFLDIAAPSVILAQAIGRWGNFMNHEAYGPATTRQFLENLHLPTFIIDNMNINGTYHQPTFLYESVWNVLGFIVLVLLRKKPHFLKEGEVFLGYIIWYSFGRFFIEGLRMDSLYAFSNIRVSQLLSLVMFVAAIVIVIVRRRNPNLKFYNREKQKKKITTS.

The next 3 membrane-spanning stretches (helical) occupy residues 13–33, 50–70, and 89–109; these read LFGIPVYWYAIIIVSGIALAV, VFDFMLWGLPAAIVGARLYYV, and NGGLAIYGGLIGGGLALFFFT. Arg135 provides a ligand contact to a 1,2-diacyl-sn-glycero-3-phospho-(1'-sn-glycerol). The next 3 helical transmembrane spans lie at 175–195, 205–225, and 236–256; these read QPTFLYESVWNVLGFIVLVLL, GEVFLGYIIWYSFGRFFIEGL, and IRVSQLLSLVMFVAAIVIVIV.

It belongs to the Lgt family.

Its subcellular location is the cell membrane. It carries out the reaction L-cysteinyl-[prolipoprotein] + a 1,2-diacyl-sn-glycero-3-phospho-(1'-sn-glycerol) = an S-1,2-diacyl-sn-glyceryl-L-cysteinyl-[prolipoprotein] + sn-glycerol 1-phosphate + H(+). Its pathway is protein modification; lipoprotein biosynthesis (diacylglyceryl transfer). Its function is as follows. Catalyzes the transfer of the diacylglyceryl group from phosphatidylglycerol to the sulfhydryl group of the N-terminal cysteine of a prolipoprotein, the first step in the formation of mature lipoproteins. This is Phosphatidylglycerol--prolipoprotein diacylglyceryl transferase from Enterococcus faecalis (strain ATCC 700802 / V583).